Reading from the N-terminus, the 274-residue chain is Aliphatic sulfonates import ATP-binding protein SsuB 2 (274 aa).

Residues 21–235 form the ABC transporter domain; it reads VQLRNVVRQF…DSGQAGFQLI (215 aa). ATP is bound at residue 53 to 60; it reads GASGSGKT.

Belongs to the ABC transporter superfamily. Aliphatic sulfonates importer (TC 3.A.1.17.2) family. The complex is composed of two ATP-binding proteins (SsuB), two transmembrane proteins (SsuC) and a solute-binding protein (SsuA).

The protein localises to the cell inner membrane. The catalysed reaction is ATP + H2O + aliphatic sulfonate-[sulfonate-binding protein]Side 1 = ADP + phosphate + aliphatic sulfonateSide 2 + [sulfonate-binding protein]Side 1.. In terms of biological role, part of the ABC transporter complex SsuABC involved in aliphatic sulfonates import. Responsible for energy coupling to the transport system. This is Aliphatic sulfonates import ATP-binding protein SsuB 2 from Pseudomonas syringae pv. syringae (strain B728a).